Consider the following 287-residue polypeptide: 3-methyl-2-oxobutanoate hydroxymethyltransferase (287 aa).

2 residues coordinate Mg(2+): D57 and D96. 3-methyl-2-oxobutanoate is bound by residues 57-58 (DS), D96, and K125. Residue E127 participates in Mg(2+) binding. E194 (proton acceptor) is an active-site residue.

Belongs to the PanB family. As to quaternary structure, homodecamer; pentamer of dimers. Mg(2+) is required as a cofactor.

The protein localises to the cytoplasm. The enzyme catalyses 3-methyl-2-oxobutanoate + (6R)-5,10-methylene-5,6,7,8-tetrahydrofolate + H2O = 2-dehydropantoate + (6S)-5,6,7,8-tetrahydrofolate. Its pathway is cofactor biosynthesis; (R)-pantothenate biosynthesis; (R)-pantoate from 3-methyl-2-oxobutanoate: step 1/2. Its function is as follows. Catalyzes the reversible reaction in which hydroxymethyl group from 5,10-methylenetetrahydrofolate is transferred onto alpha-ketoisovalerate to form ketopantoate. This is 3-methyl-2-oxobutanoate hydroxymethyltransferase from Methylobacterium sp. (strain 4-46).